Reading from the N-terminus, the 1701-residue chain is Merozoite surface protein 1 (1701 aa).

An N-terminal signal peptide occupies residues 1-19 (MKIIFFLCSFLFFIINTQC). Positions 89–100 (GSGGSVASGGSG) are enriched in gly residues. The interval 89–118 (GSGGSVASGGSGNSRRTNPSDNSSDSNTKT) is disordered. The span at 101–116 (NSRRTNPSDNSSDSNT) shows a compositional bias: low complexity. Residues asparagine 110 and asparagine 239 are each glycosylated (N-linked (GlcNAc...) asparagine). The disordered stretch occupies residues 322–344 (DAENPTTGSKPNPLPENKKKEVE). Residues asparagine 470, asparagine 536, and asparagine 607 are each glycosylated (N-linked (GlcNAc...) asparagine). The interval 704–739 (SETTEDGGHSTHTLSQSGETEVTEETEVTEETVGHT) is disordered. The span at 724–733 (EVTEETEVTE) shows a compositional bias: acidic residues. N-linked (GlcNAc...) asparagine glycans are attached at residues asparagine 802, asparagine 899, asparagine 919, asparagine 965, asparagine 991, asparagine 1089, and asparagine 1196. Residues 889 to 927 (TGTSSTSSPGNTTVNTAQSATHSNSQNQQSNASSTNTQN) are compositionally biased toward low complexity. The disordered stretch occupies residues 889–936 (TGTSSTSSPGNTTVNTAQSATHSNSQNQQSNASSTNTQNGVAVSSGPA). Disordered regions lie at residues 1231–1259 (PPQP…TQIP) and 1451–1472 (KEKF…DEQK). Positions 1245-1259 (VSGSSGSTKEETQIP) are enriched in polar residues. Positions 1456-1465 (SSPPTTPPSP) are enriched in pro residues. The N-linked (GlcNAc...) asparagine glycan is linked to asparagine 1588. EGF-like domains lie at 1592-1632 (HQCV…VENP) and 1633-1680 (NPTC…IFCS). Cystine bridges form between cysteine 1594–cysteine 1605, cysteine 1599–cysteine 1615, cysteine 1617–cysteine 1628, cysteine 1636–cysteine 1649, cysteine 1643–cysteine 1663, and cysteine 1665–cysteine 1679. The GPI-anchor amidated serine moiety is linked to residue serine 1680. Positions 1681 to 1701 (SSNFLGISFLLILMLILYSFI) are cleaved as a propeptide — removed in mature form.

Forms a complex composed of subunits p83, p30, p38, and p42 which remain non-covalently associated; the complex is formed at the merozoite surface prior to egress from host erythrocytes. Forms a complex composed of processed MSP1 subunits, MSP6 subunit p36 and MSP7; the complex is formed at the merozoite surface prior to egress from host erythrocytes. Within the complex, interacts (via subunit p38) with MSP6 subunit p36 and (via subunits p83, p30 and p38) with MSP7 (via subunit p22). Forms a complex composed of MSP1, MSP6, DBLMSP1 and DBLMSP2. Within the complex, interacts (via subunit p38) with DBLMSP1 and DBLMSP2. Forms a complex composed of MSP1, and rhoptry proteins RhopH3, RAP1 and CLAG9/RhopH3. Within the complex, interacts (via subunits p42 and p19) with RhopH3 (via C-terminus). Forms a complex composed of MSP1, MSP6, MSP7, MSP9 and MSP3; within the complex, MSP6 and MSP9 mediate the binding to the host erythrocyte. Interacts (via subunits p19 and p42) with MSP9; the interaction is direct; MSP1 subunits p19 or p42, and MSP9 form a co-ligand complex that interacts with host SLC4A1/Band 3 protein. May interact with PFD6. Interacts with host spectrin. As to quaternary structure, interacts with host glycophorin GYPA in a sialic acid-independent manner. In terms of assembly, interacts with host proinflammatory cytokine S100P; the interaction blocks S100P inflammatory and chemotactic activities. Interacts with host SLC4A1/Band 3 (via 5ABC region) on the host erythrocyte surface in a sialic acid-independent manner. In terms of processing, the p190 precursor is cleaved by SUB1 prior to merozoite egress into 4 subunits p83, p30, p38, and p42 which remain non-covalently associated. SUB1-mediated proteolytic cleavage occurs in an orderly manner; the first cleavage occurs at the p30/p38 site, followed by cleavage at the p83/p30 site, in the 3D7 strain a second cleavage occurs at the N-terminus of p83, the last cleavage occurs at the p38/p42 site. The order of cleavage is essential for parasite viability. SUB1-mediated processing is essential for merozoite egress. In a second processing step during erythrocyte invasion, p42 is cleaved by SUB2 into p33 and p19; the latter remains attached to the merozoite surface via its GPI-anchor and is endocytosed during the subsequent ring stage.

It localises to the cell membrane. The protein resides in the secreted. The protein localises to the vacuole membrane. Its function is as follows. During the asexual blood stage, involved in merozoite egress from host erythrocytes possibly via its interaction with the host cytoskeleton protein spectrin resulting in the destabilization of the host cytoskeleton and thus leading to erythrocyte cell membrane rupture. Involved in the binding to host erythrocytes and is required for host erythrocyte invasion. In terms of biological role, by binding to host proinflammatory cytokine S100P may interfere with host immune responses. Functionally, involved in merozoite invasion of host erythrocytes. May play a role in the biogenesis and/or function of the food vacuole during the intraerythrocytic development. This Plasmodium falciparum (isolate FC27 / Papua New Guinea) protein is Merozoite surface protein 1.